The sequence spans 3411 residues: Genome polyprotein (3411 aa).

Residues methionine 1–aspartate 104 lie on the Cytoplasmic side of the membrane. Residues proline 38–leucine 72 are hydrophobic; homodimerization of capsid protein C. Positions serine 102–glycine 121 are cleaved as a propeptide — ER anchor for the capsid protein C, removed in mature form by serine protease NS3. Residues valine 105–methionine 125 traverse the membrane as a helical segment. Topologically, residues arginine 126–arginine 244 are extracellular. N-linked (GlcNAc...) asparagine; by host glycosylation is found at asparagine 134 and asparagine 150. The chain crosses the membrane as a helical span at residues tryptophan 245 to serine 265. The Cytoplasmic segment spans residues asparagine 266–arginine 270. Residues valine 271 to serine 285 form a helical membrane-spanning segment. Topologically, residues alanine 286 to leucine 730 are extracellular. Intrachain disulfides connect cysteine 288–cysteine 315, cysteine 345–cysteine 401, cysteine 345–cysteine 406, cysteine 359–cysteine 390, cysteine 377–cysteine 401, cysteine 377–cysteine 406, cysteine 467–cysteine 568, and cysteine 585–cysteine 615. Residues aspartate 383 to glycine 396 are fusion peptide. Residues phenylalanine 731–phenylalanine 751 traverse the membrane as a helical segment. The Cytoplasmic portion of the chain corresponds to asparagine 752–threonine 757. A helical transmembrane segment spans residues methionine 758–alanine 778. Over aspartate 779–glutamate 1132 the chain is Extracellular. 6 disulfides stabilise this stretch: cysteine 782–cysteine 793, cysteine 833–cysteine 921, cysteine 957–cysteine 1002, cysteine 1058–cysteine 1107, cysteine 1069–cysteine 1091, and cysteine 1090–cysteine 1094. N-linked (GlcNAc...) asparagine; by host glycans are attached at residues asparagine 908 and asparagine 986. Residues isoleucine 1133–lysine 1153 traverse the membrane as a helical segment. The Cytoplasmic portion of the chain corresponds to arginine 1154 to alanine 1201. Residues methionine 1202–leucine 1222 form a helical membrane-spanning segment. Topologically, residues arginine 1223–proline 1287 are lumenal. The chain crosses the membrane as a helical span at residues valine 1288–valine 1308. At leucine 1309–serine 1355 the chain is on the cytoplasmic side. Residues isoleucine 1356–phenylalanine 1376 traverse the membrane as a helical segment. Over glutamine 1377–glutamate 1378 the chain is Lumenal. A helical transmembrane segment spans residues methionine 1379–alanine 1399. Over glycine 1400–leucine 1456 the chain is Cytoplasmic. The interacts with and activates NS3 protease stretch occupies residues leucine 1407–valine 1446. The segment at residues alanine 1457–phenylalanine 1477 is an intramembrane region (helical). At histidine 1478–alanine 2157 the chain is on the cytoplasmic side. Positions serine 1485–leucine 1665 constitute a Peptidase S7 domain. Active-site charge relay system; for serine protease NS3 activity residues include histidine 1537, aspartate 1561, and serine 1622. In terms of domain architecture, Helicase ATP-binding spans proline 1669–glutamine 1825. An important for RNA-binding region spans residues lysine 1673–lysine 1676. Phenylalanine 1682–threonine 1689 contacts ATP. Residues aspartate 1773–histidine 1776 carry the DEAH box motif. The region spanning glutamate 1820–tyrosine 1997 is the Helicase C-terminal domain. The residue at position 1877 (lysine 1877) is an N6-acetyllysine; by host. The interval alanine 1942–tyrosine 1961 is disordered. The helical transmembrane segment at methionine 2158–phenylalanine 2178 threads the bilayer. At methionine 2179 to arginine 2186 the chain is on the lumenal side. Residues methionine 2187–glutamate 2207 constitute an intramembrane region (helical). The Lumenal segment spans residues proline 2208–threonine 2209. The chain crosses the membrane as a helical span at residues histidine 2210–glycine 2230. Topologically, residues glutamine 2231 to alanine 2241 are cytoplasmic. Residues phenylalanine 2242 to alanine 2256 traverse the membrane as a helical segment. Residues asparagine 2257–glycine 2293 are Lumenal-facing. Positions alanine 2294–isoleucine 2314 form an intramembrane region, helical. Over lysine 2315–isoleucine 2360 the chain is Lumenal. Residues threonine 2361–leucine 2380 form a helical membrane-spanning segment. The Cytoplasmic segment spans residues proline 2381–alanine 2421. The chain crosses the membrane as a helical span at residues leucine 2422–methionine 2442. The Lumenal portion of the chain corresponds to cysteine 2443 to threonine 2445. The helical transmembrane segment at proline 2446 to glycine 2466 threads the bilayer. The Cytoplasmic segment spans residues asparagine 2467 to isoleucine 3411. The region spanning glycine 2507–serine 2771 is the mRNA cap 0-1 NS5-type MT domain. An S-adenosyl-L-methionine-binding site is contributed by serine 2562. Serine 2562 carries the phosphoserine modification. Lysine 2567 functions as the For 2'-O-MTase activity in the catalytic mechanism. Positions 2592, 2593, 2610, 2611, 2637, and 2638 each coordinate S-adenosyl-L-methionine. Aspartate 2652 functions as the For 2'-O-MTase activity in the catalytic mechanism. Isoleucine 2653 is a binding site for S-adenosyl-L-methionine. Residues lysine 2688 and glutamate 2724 each act as for 2'-O-MTase activity in the active site. S-adenosyl-L-methionine is bound at residue tyrosine 2726. Residues arginine 2878–arginine 2911 carry the Nuclear localization signal motif. Zn(2+) contacts are provided by glutamate 2945, histidine 2949, cysteine 2954, and cysteine 2957. The RdRp catalytic domain maps to glycine 3035 to alanine 3187. Zn(2+)-binding residues include histidine 3222, cysteine 3238, and cysteine 3357.

In the N-terminal section; belongs to the class I-like SAM-binding methyltransferase superfamily. mRNA cap 0-1 NS5-type methyltransferase family. As to quaternary structure, homodimer. Interacts (via N-terminus) with host EXOC1 (via C-terminus); this interaction results in EXOC1 degradation through the proteasome degradation pathway. Forms heterodimers with envelope protein E in the endoplasmic reticulum and Golgi. In terms of assembly, homodimer; in the endoplasmic reticulum and Golgi. Interacts with protein prM. Interacts with non-structural protein 1. As to quaternary structure, homodimer; Homohexamer when secreted. Interacts with envelope protein E. Interacts (via N-terminus) with serine protease NS3. In terms of assembly, forms a heterodimer with serine protease NS3. May form homooligomers. As to quaternary structure, forms a heterodimer with NS2B. Interacts with non-structural protein 2A (via N-terminus). Interacts with NS4B. Interacts with unphosphorylated RNA-directed RNA polymerase NS5; this interaction stimulates RNA-directed RNA polymerase NS5 guanylyltransferase activity. NS3 interacts with host PDCD6IP; this interaction contributes to virion release. Interacts with serine protease NS3. In terms of assembly, homodimer. Interacts with host STAT2; this interaction prevents the establishment of cellular antiviral state. Interacts with serine protease NS3. Interacts with host TRIM23; this interaction leads to NS5 ubiquitination. Post-translationally, specific enzymatic cleavages in vivo yield mature proteins. The nascent capsid protein C contains a C-terminal hydrophobic domain that act as a signal sequence for translocation of prM into the lumen of the ER. Mature capsid protein C is cleaved at a site upstream of this hydrophobic domain by NS3. prM is cleaved in post-Golgi vesicles by a host furin, releasing the mature small envelope protein M, and peptide pr. Non-structural protein 2A-alpha, a C-terminally truncated form of non-structural protein 2A, results from partial cleavage by NS3. Specific enzymatic cleavages in vivo yield mature proteins peptide 2K acts as a signal sequence and is removed from the N-terminus of NS4B by the host signal peptidase in the ER lumen. Signal cleavage at the 2K-4B site requires a prior NS3 protease-mediated cleavage at the 4A-2K site. Cleaved in post-Golgi vesicles by a host furin, releasing the mature small envelope protein M, and peptide pr. This cleavage is incomplete as up to 30% of viral particles still carry uncleaved prM. In terms of processing, N-glycosylated. Post-translationally, N-glycosylated. The excreted form is glycosylated and this is required for efficient secretion of the protein from infected cells. Polyubiquitinated; ubiquitination is probably mediated by host TRIM23 and is prerequisite for NS5-STAT2 interaction. NS5 is not ISGylated or sumoylated. In terms of processing, acetylated by host KAT5. Acetylation modulates NS3 RNA-binding and unwinding activities and plays an important positive role for viral replication. Post-translationally, phosphorylated on serines residues. This phosphorylation may trigger NS5 nuclear localization.

The protein resides in the virion. The protein localises to the host nucleus. It is found in the host cytoplasm. It localises to the host perinuclear region. Its subcellular location is the secreted. The protein resides in the virion membrane. The protein localises to the host endoplasmic reticulum membrane. The enzyme catalyses Selective hydrolysis of -Xaa-Xaa-|-Yaa- bonds in which each of the Xaa can be either Arg or Lys and Yaa can be either Ser or Ala.. The catalysed reaction is RNA(n) + a ribonucleoside 5'-triphosphate = RNA(n+1) + diphosphate. It carries out the reaction a ribonucleoside 5'-triphosphate + H2O = a ribonucleoside 5'-diphosphate + phosphate + H(+). It catalyses the reaction ATP + H2O = ADP + phosphate + H(+). The enzyme catalyses a 5'-end (5'-triphosphoguanosine)-ribonucleoside in mRNA + S-adenosyl-L-methionine = a 5'-end (N(7)-methyl 5'-triphosphoguanosine)-ribonucleoside in mRNA + S-adenosyl-L-homocysteine. The catalysed reaction is a 5'-end (N(7)-methyl 5'-triphosphoguanosine)-ribonucleoside in mRNA + S-adenosyl-L-methionine = a 5'-end (N(7)-methyl 5'-triphosphoguanosine)-(2'-O-methyl-ribonucleoside) in mRNA + S-adenosyl-L-homocysteine + H(+). Functionally, plays a role in virus budding by binding to the cell membrane and gathering the viral RNA into a nucleocapsid that forms the core of a mature virus particle. During virus entry, may induce genome penetration into the host cytoplasm after hemifusion induced by the surface proteins. Can migrate to the cell nucleus where it modulates host functions. Inhibits RNA silencing by interfering with host Dicer. In terms of biological role, prevents premature fusion activity of envelope proteins in trans-Golgi by binding to envelope protein E at pH6.0. After virion release in extracellular space, gets dissociated from E dimers. Its function is as follows. Acts as a chaperone for envelope protein E during intracellular virion assembly by masking and inactivating envelope protein E fusion peptide. prM is the only viral peptide matured by host furin in the trans-Golgi network probably to avoid catastrophic activation of the viral fusion activity in acidic Golgi compartment prior to virion release. prM-E cleavage is inefficient, and many virions are only partially matured. These uncleaved prM would play a role in immune evasion. Functionally, may play a role in virus budding. Exerts cytotoxic effects by activating a mitochondrial apoptotic pathway through M ectodomain. May display a viroporin activity. Binds to host cell surface receptor and mediates fusion between viral and cellular membranes. Envelope protein is synthesized in the endoplasmic reticulum in the form of heterodimer with protein prM. They play a role in virion budding in the ER, and the newly formed immature particle is covered with 60 spikes composed of heterodimer between precursor prM and envelope protein E. The virion is transported to the Golgi apparatus where the low pH causes dissociation of PrM-E heterodimers and formation of E homodimers. prM-E cleavage is inefficient, and many virions are only partially matured. These uncleaved prM would play a role in immune evasion. In terms of biological role, involved in immune evasion, pathogenesis and viral replication. Once cleaved off the polyprotein, is targeted to three destinations: the viral replication cycle, the plasma membrane and the extracellular compartment. Essential for viral replication. Required for formation of the replication complex and recruitment of other non-structural proteins to the ER-derived membrane structures. Excreted as a hexameric lipoparticle that plays a role against host immune response. Antagonizing the complement function. Binds to the host macrophages and dendritic cells. Inhibits signal transduction originating from Toll-like receptor 3 (TLR3). Its function is as follows. Component of the viral RNA replication complex that functions in virion assembly and antagonizes the host immune response. Functionally, required cofactor for the serine protease function of NS3. May have membrane-destabilizing activity and form viroporins. Displays three enzymatic activities: serine protease, NTPase and RNA helicase. NS3 serine protease, in association with NS2B, performs its autocleavage and cleaves the polyprotein at dibasic sites in the cytoplasm: C-prM, NS2A-NS2B, NS2B-NS3, NS3-NS4A, NS4A-2K and NS4B-NS5. NS3 RNA helicase binds RNA and unwinds dsRNA in the 3' to 5' direction. Also plays a role in virus assembly. In terms of biological role, regulates the ATPase activity of the NS3 helicase activity. NS4A allows NS3 helicase to conserve energy during unwinding. Its function is as follows. Functions as a signal peptide for NS4B and is required for the interferon antagonism activity of the latter. Functionally, induces the formation of ER-derived membrane vesicles where the viral replication takes place. Inhibits interferon (IFN)-induced host STAT1 phosphorylation and nuclear translocation, thereby preventing the establishment of cellular antiviral state by blocking the IFN-alpha/beta pathway. Replicates the viral (+) and (-) RNA genome, and performs the capping of genomes in the cytoplasm. NS5 methylates viral RNA cap at guanine N-7 and ribose 2'-O positions. Besides its role in RNA genome replication, also prevents the establishment of cellular antiviral state by blocking the interferon-alpha/beta (IFN-alpha/beta) signaling pathway. IFN-I induces binding of NS5 to host IFN-activated transcription factor STAT2, preventing its transcriptional activity. Host TRIM23 is the E3 ligase that interacts with and polyubiquitinates NS5 to promote its binding to STAT2 and trigger IFN-I signaling inhibition. In Aedes aegypti (Yellowfever mosquito), this protein is Genome polyprotein.